Reading from the N-terminus, the 264-residue chain is Complement C1q tumor necrosis factor-related protein 6 (264 aa).

Residues 1–24 (MRVIMGIASLGFLWAVFLLPLVFG) form the signal peptide. An N-linked (GlcNAc...) asparagine glycan is attached at asparagine 77. The segment at 81–125 (LKGDKGDRGPTGTPGKPGKNGTRGDRGSQGVKGDKGQAGSPGSSC) is disordered. The region spanning 83 to 124 (GDKGDRGPTGTPGKPGKNGTRGDRGSQGVKGDKGQAGSPGSS) is the Collagen-like domain. The segment covering 90-100 (PTGTPGKPGKN) has biased composition (low complexity). The C1q domain maps to 125–264 (CQTHYSAFSV…SGHLIKAEDN (140 aa)).

Its subcellular location is the secreted. In Mus musculus (Mouse), this protein is Complement C1q tumor necrosis factor-related protein 6 (C1qtnf6).